Reading from the N-terminus, the 74-residue chain is Cytochrome c oxidase subunit 3 (74 aa).

2 helical membrane passes run 15–37 (SPWPLTGAIGAMTTVSGMVKWFH) and 42–59 (SLFLLGNIITILTVYQWW).

Belongs to the cytochrome c oxidase subunit 3 family. As to quaternary structure, component of the cytochrome c oxidase (complex IV, CIV), a multisubunit enzyme composed of a catalytic core of 3 subunits and several supernumerary subunits. The complex exists as a monomer or a dimer and forms supercomplexes (SCs) in the inner mitochondrial membrane with ubiquinol-cytochrome c oxidoreductase (cytochrome b-c1 complex, complex III, CIII).

It is found in the mitochondrion inner membrane. The enzyme catalyses 4 Fe(II)-[cytochrome c] + O2 + 8 H(+)(in) = 4 Fe(III)-[cytochrome c] + 2 H2O + 4 H(+)(out). Its function is as follows. Component of the cytochrome c oxidase, the last enzyme in the mitochondrial electron transport chain which drives oxidative phosphorylation. The respiratory chain contains 3 multisubunit complexes succinate dehydrogenase (complex II, CII), ubiquinol-cytochrome c oxidoreductase (cytochrome b-c1 complex, complex III, CIII) and cytochrome c oxidase (complex IV, CIV), that cooperate to transfer electrons derived from NADH and succinate to molecular oxygen, creating an electrochemical gradient over the inner membrane that drives transmembrane transport and the ATP synthase. Cytochrome c oxidase is the component of the respiratory chain that catalyzes the reduction of oxygen to water. Electrons originating from reduced cytochrome c in the intermembrane space (IMS) are transferred via the dinuclear copper A center (CU(A)) of subunit 2 and heme A of subunit 1 to the active site in subunit 1, a binuclear center (BNC) formed by heme A3 and copper B (CU(B)). The BNC reduces molecular oxygen to 2 water molecules using 4 electrons from cytochrome c in the IMS and 4 protons from the mitochondrial matrix. The polypeptide is Cytochrome c oxidase subunit 3 (mt:CoIII) (Drosophila simulans (Fruit fly)).